The following is a 107-amino-acid chain: Iron-sulfur cluster assembly protein CyaY (107 aa).

Belongs to the frataxin family.

In terms of biological role, involved in iron-sulfur (Fe-S) cluster assembly. May act as a regulator of Fe-S biogenesis. The sequence is that of Iron-sulfur cluster assembly protein CyaY from Neisseria meningitidis serogroup A / serotype 4A (strain DSM 15465 / Z2491).